A 2431-amino-acid chain; its full sequence is Histone-lysine N-methyltransferase trr (2431 aa).

Disordered stretches follow at residues 34 to 78 (LQKR…STAP), 135 to 201 (DADK…ENSG), 213 to 235 (ASGA…AGTP), and 759 to 789 (QSAN…TPMN). Polar residues predominate over residues 142-165 (YRISTPRNSQSNPLLHRNTAFTSF). 3 stretches are compositionally biased toward low complexity: residues 171 to 183 (ASSS…STAS), 218 to 235 (SSTS…AGTP), and 767 to 787 (ATST…NATP). The LXXLL motif 1 motif lies at 801–805 (LKQLL). Disordered regions lie at residues 863–895 (PVPT…GGSS), 918–973 (VGGE…QVKQ), 1226–1292 (HPQQ…AGGA), 1404–1433 (TSGG…KGGS), and 1478–1500 (GLVG…AEKM). 3 stretches are compositionally biased toward low complexity: residues 866-895 (TATQ…GGSS), 952-970 (QQQQ…SPHQ), and 1226-1241 (HPQQ…QPQN). Basic residues predominate over residues 1269 to 1281 (RKRRKREVQKPRR). Low complexity predominate over residues 1410 to 1422 (PASMSSAASAGSS). Residues 1423-1433 (SAGGGKLKGGS) show a composition bias toward gly residues. The residue at position 1486 (Thr1486) is a Phosphothreonine. Residues Ser1488 and Ser1490 each carry the phosphoserine modification. Positions 1652 to 1656 (LANLL) match the LXXLL motif 2 motif. The interval 1790-1836 (GGSAVKSSNGDSPGSFCASSTAPAEMVVKQEPEDEDEKTPSVPGNPT) is disordered. Residues 1794 to 1811 (VKSSNGDSPGSFCASSTA) are compositionally biased toward polar residues. A C2HC pre-PHD-type zinc finger spans residues 1895–1935 (TRQCVFCNQRGDGQADGPSRLLNFDVDKWVHLNCALWSNGV). Residues 1956–2003 (QACSACHQPGATIKCFKSRCNSLYHLPCAIREECVFYKNKSVHCSVHG) form a PHD-type zinc finger. The LXXLL motif 3 signature appears at 2060-2064 (LSNLL). The FYR N-terminal domain maps to 2061 to 2121 (SNLLRVGNMT…CRYICSIAEA (61 aa)). The 88-residue stretch at 2122–2209 (GCKPEFRIQV…ETLTDYRFKY (88 aa)) folds into the FYR C-terminal domain. The SET domain maps to 2291-2407 (NNVYLARSKI…RGEELSYDYK (117 aa)). Residues 2415 to 2431 (HKIPCACGAPNCRKWMN) enclose the Post-SET domain.

It belongs to the class V-like SAM-binding methyltransferase superfamily. Histone-lysine methyltransferase family. TRX/MLL subfamily. As to quaternary structure, component of the MLL3/4 complex composed at least of the catalytic subunit trr, ash2, Rbbp5, Dpy-30L1, wds, hcf, ptip, Pa1, Utx, Lpt and Ncoa6. Interacts with nuclear receptor EcR in an ecdysone-dependent manner. Interacts with ash2; the interaction stabilizes trr. Widely expressed.

The protein resides in the nucleus. It is found in the chromosome. It carries out the reaction L-lysyl(4)-[histone H3] + 3 S-adenosyl-L-methionine = N(6),N(6),N(6)-trimethyl-L-lysyl(4)-[histone H3] + 3 S-adenosyl-L-homocysteine + 3 H(+). Its function is as follows. Histone methyltransferase that acts as a coactivator for the ecdysone receptor during development. Specifically trimethylates 'Lys-4' of histone H3, a specific tag for epigenetic transcriptional activation. Recruited by EcR in an ecdysone-dependent manner causing H3 'Lys-4' trimethylation at ecdysone-inducible promoters, leading to activate expression. Plays a central role in the developing compound eye, during the progression of the morphogenetic furrow and in post-furrow differentiation of the retinal epithelium, notably by activating expression of hh. Also required for wing and abdominal development. The sequence is that of Histone-lysine N-methyltransferase trr (trr) from Drosophila melanogaster (Fruit fly).